The chain runs to 234 residues: uncharacterized protein (234 aa).

Disordered stretches follow at residues 1–65 (MTSV…RRGP) and 182–234 (ARGA…GRKT).

This is an uncharacterized protein from Homo sapiens (Human).